The following is a 361-amino-acid chain: Glutaminyl-peptide cyclotransferase (361 aa).

Positions 1–28 are cleaved as a signal peptide; the sequence is MAGCRDPRVVDTLHLLLLVAVLPLAVSG. Asparagine 49 carries an N-linked (GlcNAc...) asparagine glycan. Residues cysteine 139 and cysteine 164 are joined by a disulfide bond. Aspartate 159 is a Zn(2+) binding site. Asparagine 183 is a glycosylation site (N-linked (GlcNAc...) asparagine). Catalysis depends on glutamate 201, which acts as the Proton acceptor. Glutamate 202 lines the Zn(2+) pocket. Aspartate 248 (proton acceptor) is an active-site residue. Histidine 330 contributes to the Zn(2+) binding site.

It belongs to the glutaminyl-peptide cyclotransferase family. In terms of tissue distribution, expressed mainly in brain tissue.

It is found in the secreted. The enzyme catalyses N-terminal L-glutaminyl-[peptide] = N-terminal 5-oxo-L-prolyl-[peptide] + NH4(+). Its function is as follows. Responsible for the biosynthesis of pyroglutamyl peptides. Has a bias against acidic and tryptophan residues adjacent to the N-terminal glutaminyl residue and a lack of importance of chain length after the second residue. Also catalyzes N-terminal pyroglutamate formation. The chain is Glutaminyl-peptide cyclotransferase (QPCT) from Bos taurus (Bovine).